The chain runs to 106 residues: ATP-dependent Clp protease adapter protein ClpS (106 aa).

It belongs to the ClpS family. In terms of assembly, binds to the N-terminal domain of the chaperone ClpA.

In terms of biological role, involved in the modulation of the specificity of the ClpAP-mediated ATP-dependent protein degradation. The protein is ATP-dependent Clp protease adapter protein ClpS of Vibrio atlanticus (strain LGP32) (Vibrio splendidus (strain Mel32)).